The chain runs to 368 residues: Dihydroorotate dehydrogenase (quinone) (368 aa).

Residues 67–71 and threonine 91 each bind FMN; that span reads AGFDK. A substrate-binding site is contributed by lysine 71. 116 to 120 contributes to the substrate binding site; the sequence is NRMGF. The FMN site is built by asparagine 146 and asparagine 179. Asparagine 179 lines the substrate pocket. Serine 182 functions as the Nucleophile in the catalytic mechanism. Residue asparagine 184 coordinates substrate. Positions 222 and 250 each coordinate FMN. 251–252 provides a ligand contact to substrate; that stretch reads NT. FMN is bound by residues glycine 276, glycine 305, and 326–327; that span reads YS.

The protein belongs to the dihydroorotate dehydrogenase family. Type 2 subfamily. In terms of assembly, monomer. FMN serves as cofactor.

It is found in the cell membrane. It catalyses the reaction (S)-dihydroorotate + a quinone = orotate + a quinol. The protein operates within pyrimidine metabolism; UMP biosynthesis via de novo pathway; orotate from (S)-dihydroorotate (quinone route): step 1/1. Its function is as follows. Catalyzes the conversion of dihydroorotate to orotate with quinone as electron acceptor. The protein is Dihydroorotate dehydrogenase (quinone) of Streptomyces coelicolor (strain ATCC BAA-471 / A3(2) / M145).